A 1385-amino-acid chain; its full sequence is Formin-like protein 7 (1385 aa).

The region spanning 9 to 193 (FKKPPDGLLL…RYVSMRNVVP (185 aa)) is the Phosphatase tensin-type domain. Catalysis depends on Cys126, which acts as the Phosphocysteine intermediate. The C2 tensin-type domain occupies 199–358 (DRALTLDSVI…KASSTSQGNI (160 aa)). Disordered regions lie at residues 345–367 (IPQR…DGSE), 427–510 (APSR…LTVN), 649–989 (STAA…PLHW), and 1362–1385 (KRAQ…LLEP). 3 stretches are compositionally biased toward polar residues: residues 349–358 (KASSTSQGNI), 448–470 (TSAS…SPVQ), and 483–510 (PAQS…LTVN). Pro residues-rich tracts occupy residues 654-665 (PPLPPPLPPPLK) and 689-701 (TQPP…PPIQ). The span at 702 to 718 (PTLISNSIYSSTSSVVS) shows a compositional bias: low complexity. Composition is skewed to pro residues over residues 727–758 (PAPP…PPSA), 766–795 (PVPP…PPAA), and 802–815 (AVPP…PPMV). Over residues 855 to 867 (QTSSLVSSLPSSR) the composition is skewed to low complexity. 2 stretches are compositionally biased toward pro residues: residues 895–906 (SAPPAPPLPPPK) and 921–932 (WPPPPPPGPPPK). The segment covering 933–942 (NSSNSLPSKG) has biased composition (low complexity). The FH2 domain occupies 974–1372 (RPNQSSKRTP…RAQMEAEKEK (399 aa)).

This sequence belongs to the formin-like family. Class-II subfamily.

In Oryza sativa subsp. japonica (Rice), this protein is Formin-like protein 7 (FH7).